The primary structure comprises 542 residues: GMP synthase [glutamine-hydrolyzing] (542 aa).

The 191-residue stretch at methionine 28–threonine 218 folds into the Glutamine amidotransferase type-1 domain. The active-site Nucleophile is cysteine 105. Active-site residues include histidine 192 and glutamate 194. Residues tryptophan 219–arginine 417 enclose the GMPS ATP-PPase domain. Position 246-252 (serine 246–serine 252) interacts with ATP.

In terms of assembly, homodimer.

It carries out the reaction XMP + L-glutamine + ATP + H2O = GMP + L-glutamate + AMP + diphosphate + 2 H(+). The protein operates within purine metabolism; GMP biosynthesis; GMP from XMP (L-Gln route): step 1/1. Catalyzes the synthesis of GMP from XMP. This is GMP synthase [glutamine-hydrolyzing] from Gloeothece citriformis (strain PCC 7424) (Cyanothece sp. (strain PCC 7424)).